Consider the following 271-residue polypeptide: Neurexophilin-1 (271 aa).

The signal sequence occupies residues methionine 1–cysteine 21. Residues alanine 22 to leucine 97 form an II region. Asparagine 23, asparagine 68, asparagine 93, asparagine 146, asparagine 156, and asparagine 162 each carry an N-linked (GlcNAc...) asparagine glycan. Residues glutamine 98–phenylalanine 176 form an III region. The segment at aspartate 177–aspartate 185 is IV (linker domain). Residues alanine 186–glycine 271 are v (Cys-rich).

Belongs to the neurexophilin family.

Its subcellular location is the secreted. Its function is as follows. May be signaling molecules that resemble neuropeptides and that act by binding to alpha-neurexins and possibly other receptors. The protein is Neurexophilin-1 (NXPH1) of Pongo abelii (Sumatran orangutan).